The primary structure comprises 467 residues: Gamma-aminobutyric acid receptor subunit gamma-3 (467 aa).

An N-terminal signal peptide occupies residues methionine 1–alanine 17. Residues arginine 18–phenylalanine 256 lie on the Extracellular side of the membrane. Asparagine 110 is a glycosylation site (N-linked (GlcNAc...) asparagine). Cysteine 171 and cysteine 185 are oxidised to a cystine. Residue asparagine 228 is glycosylated (N-linked (GlcNAc...) asparagine). Residues threonine 257 to isoleucine 277 form a helical membrane-spanning segment. Over lysine 278–proline 283 the chain is Cytoplasmic. The chain crosses the membrane as a helical span at residues alanine 284–alanine 303. Residues arginine 304 to serine 311 are Extracellular-facing. The chain crosses the membrane as a helical span at residues tyrosine 312–methionine 332. Residues glutamate 333–arginine 446 lie on the Cytoplasmic side of the membrane. A helical membrane pass occupies residues valine 447–leucine 467.

It belongs to the ligand-gated ion channel (TC 1.A.9) family. Gamma-aminobutyric acid receptor (TC 1.A.9.5) subfamily. GABRG3 sub-subfamily. In terms of assembly, heteropentamer, formed by a combination of alpha (GABRA1-6), beta (GABRB1-3), gamma (GABRG1-3), delta (GABRD), epsilon (GABRE), rho (GABRR1-3), pi (GABRP) and theta (GABRQ) chains, each subunit exhibiting distinct physiological and pharmacological properties. Post-translationally, may be palmitoylated. As to expression, expressed in brain.

It localises to the postsynaptic cell membrane. The protein resides in the cell membrane. The enzyme catalyses chloride(in) = chloride(out). In terms of biological role, gamma subunit of the heteropentameric ligand-gated chloride channel gated by gamma-aminobutyric acid (GABA), a major inhibitory neurotransmitter in the brain. GABA-gated chloride channels, also named GABA(A) receptors (GABAAR), consist of five subunits arranged around a central pore and contain GABA active binding site(s) located at the alpha and beta subunit interface(s). When activated by GABA, GABAARs selectively allow the flow of chloride across the cell membrane down their electrochemical gradient. The polypeptide is Gamma-aminobutyric acid receptor subunit gamma-3 (Mus musculus (Mouse)).